Reading from the N-terminus, the 329-residue chain is Mitochondrial glycine transporter (329 aa).

Solcar repeat units follow at residues 19-103 (SKTT…LRQP), 130-214 (LSNW…LKRH), and 232-316 (SSSS…LILR). Transmembrane regions (helical) follow at residues 25-50 (FAAG…TRVQ), 78-104 (GTLP…RQPL), 136-161 (LGTG…VRYE), 189-212 (GFGA…EQLK), 236-262 (INFI…KTRL), and 291-309 (GLGL…AWTV).

The protein belongs to the mitochondrial carrier (TC 2.A.29) family. SLC25A38 subfamily.

It localises to the mitochondrion inner membrane. It carries out the reaction glycine(in) = glycine(out). Functionally, mitochondrial glycine transporter that imports glycine into the mitochondrial matrix. Plays an important role in providing glycine for the first enzymatic step in heme biosynthesis, the condensation of glycine with succinyl-CoA to produce 5-aminolevulinate (ALA) in the mitochondrial matrix. In Aspergillus terreus (strain NIH 2624 / FGSC A1156), this protein is Mitochondrial glycine transporter.